The following is a 356-amino-acid chain: Protein-glutamate methylesterase/protein-glutamine glutaminase 2 (356 aa).

The region spanning 7-124 is the Response regulatory domain; it reads KVLCVDDSAL…RDGLMEYTDT (118 aa). At aspartate 58 the chain carries 4-aspartylphosphate. The CheB-type methylesterase domain occupies 157 to 349; that stretch reads LLSTEKLIIL…QRVMARLATY (193 aa). Active-site residues include serine 169, histidine 195, and aspartate 291.

This sequence belongs to the CheB family. In terms of processing, phosphorylated by CheA. Phosphorylation of the N-terminal regulatory domain activates the methylesterase activity.

The protein resides in the cytoplasm. The enzyme catalyses [protein]-L-glutamate 5-O-methyl ester + H2O = L-glutamyl-[protein] + methanol + H(+). It carries out the reaction L-glutaminyl-[protein] + H2O = L-glutamyl-[protein] + NH4(+). Involved in chemotaxis. Part of a chemotaxis signal transduction system that modulates chemotaxis in response to various stimuli. Catalyzes the demethylation of specific methylglutamate residues introduced into the chemoreceptors (methyl-accepting chemotaxis proteins or MCP) by CheR. Also mediates the irreversible deamidation of specific glutamine residues to glutamic acid. The chain is Protein-glutamate methylesterase/protein-glutamine glutaminase 2 from Cupriavidus pinatubonensis (strain JMP 134 / LMG 1197) (Cupriavidus necator (strain JMP 134)).